Reading from the N-terminus, the 542-residue chain is Organic anion transporter 3 (542 aa).

Residues Met1–Arg9 lie on the Cytoplasmic side of the membrane. Ser4 carries the post-translational modification Phosphoserine. Residues Val10–Asn30 form a helical membrane-spanning segment. Topologically, residues Met31 to Glu123 are extracellular. 2 N-linked (GlcNAc...) asparagine glycosylation sites follow: Asn86 and Asn102. A helical transmembrane segment spans residues Met124–Ser144. Residues Asp145–Thr154 lie on the Cytoplasmic side of the membrane. Residues Cys155 to Ile175 form a helical membrane-spanning segment. A topological domain (extracellular) is located at residue Tyr176. Residues Met177–Leu197 form a helical membrane-spanning segment. Over Asn198–Thr212 the chain is Cytoplasmic. Residues Ala213–Pro233 traverse the membrane as a helical segment. Topologically, residues Gln234–Arg236 are extracellular. Residues Trp237–Pro257 form a helical membrane-spanning segment. The Cytoplasmic portion of the chain corresponds to Glu258–Thr327. A helical transmembrane segment spans residues Phe328–Val348. The Extracellular portion of the chain corresponds to Glu349–Asn354. Residues Leu355–Leu375 form a helical membrane-spanning segment. Over Ser376–Gln386 the chain is Cytoplasmic. The helical transmembrane segment at Ala387 to Leu407 threads the bilayer. Over Gln408 to Arg411 the chain is Extracellular. The chain crosses the membrane as a helical span at residues Thr412–Tyr432. The Cytoplasmic segment spans residues Thr433–Pro471. The chain crosses the membrane as a helical span at residues Phe472–Leu492. Residues Pro493 to Ser542 lie on the Extracellular side of the membrane. The tract at residues Lys515–Ser542 is disordered. Basic and acidic residues predominate over residues Pro517–Ser527.

The protein belongs to the major facilitator (TC 2.A.1) superfamily. Organic cation transporter (TC 2.A.1.19) family. Strongly expressed in kidney. Weaker expression in brain and skeletal muscle. Expressed in adrenal glands.

It localises to the basolateral cell membrane. The enzyme catalyses estrone 3-sulfate(out) + glutarate(in) = estrone 3-sulfate(in) + glutarate(out). It carries out the reaction estrone 3-sulfate(in) + 2-oxoglutarate(out) = estrone 3-sulfate(out) + 2-oxoglutarate(in). The catalysed reaction is glutarate(in) + 2-oxoglutarate(out) = glutarate(out) + 2-oxoglutarate(in). It catalyses the reaction urate(in) + 2-oxoglutarate(out) = urate(out) + 2-oxoglutarate(in). The enzyme catalyses taurocholate(out) + glutarate(in) = taurocholate(in) + glutarate(out). It carries out the reaction dehydroepiandrosterone 3-sulfate(out) + glutarate(in) = dehydroepiandrosterone 3-sulfate(in) + glutarate(out). The catalysed reaction is prostaglandin F2alpha(out) + glutarate(in) = prostaglandin F2alpha(in) + glutarate(out). It catalyses the reaction prostaglandin F2alpha(out) + 2-oxoglutarate(in) = prostaglandin F2alpha(in) + 2-oxoglutarate(out). The enzyme catalyses (R)-carnitine(out) + 2-oxoglutarate(in) = (R)-carnitine(in) + 2-oxoglutarate(out). It carries out the reaction glutarate(in) + (R)-carnitine(out) = glutarate(out) + (R)-carnitine(in). The catalysed reaction is prostaglandin E2(out) + 2-oxoglutarate(in) = prostaglandin E2(in) + 2-oxoglutarate(out). It catalyses the reaction prostaglandin E2(out) + glutarate(in) = prostaglandin E2(in) + glutarate(out). The enzyme catalyses urate(in) + glutarate(out) = urate(out) + glutarate(in). It carries out the reaction taurocholate(out) + 2-oxoglutarate(in) = taurocholate(in) + 2-oxoglutarate(out). The catalysed reaction is dehydroepiandrosterone 3-sulfate(out) + 2-oxoglutarate(in) = dehydroepiandrosterone 3-sulfate(in) + 2-oxoglutarate(out). It catalyses the reaction kynurenate(out) + a dicarboxylate(in) = kynurenate(in) + a dicarboxylate(out). The enzyme catalyses (indol-3-yl)acetate(out) + a dicarboxylate(in) = (indol-3-yl)acetate(in) + a dicarboxylate(out). It carries out the reaction indoxyl sulfate(out) + a dicarboxylate(in) = indoxyl sulfate(in) + a dicarboxylate(out). The catalysed reaction is N-benzoylglycine(out) + a dicarboxylate(in) = N-benzoylglycine(in) + a dicarboxylate(out). It catalyses the reaction 3-carboxy-4-methyl-5-propyl-2-furanpropanoate(out) + a dicarboxylate(in) = 3-carboxy-4-methyl-5-propyl-2-furanpropanoate(in) + a dicarboxylate(out). The enzyme catalyses (6R)-L-erythro-5,6,7,8-tetrahydrobiopterin(out) + a dicarboxylate(in) = (6R)-L-erythro-5,6,7,8-tetrahydrobiopterin(in) + a dicarboxylate(out). It carries out the reaction L-erythro-7,8-dihydrobiopterin(out) + a dicarboxylate(in) = L-erythro-7,8-dihydrobiopterin(in) + a dicarboxylate(out). The catalysed reaction is L-sepiapterin(out) + a dicarboxylate(in) = L-sepiapterin(in) + a dicarboxylate(out). Functionally, functions as an organic anion/dicarboxylate exchanger that couples organic anion uptake indirectly to the sodium gradient. Transports organic anions such as estrone 3-sulfate (E1S) and urate in exchange for dicarboxylates such as glutarate or ketoglutarate (2-oxoglutarate). Plays an important role in the excretion of endogenous and exogenous organic anions, especially from the kidney and the brain. E1S transport is pH- and chloride-dependent and may also involve E1S/cGMP exchange. Responsible for the transport of prostaglandin E2 (PGE2) and prostaglandin F2(alpha) (PGF2(alpha)) in the basolateral side of the renal tubule. Involved in the transport of neuroactive tryptophan metabolites kynurenate and xanthurenate. Functions as a biopterin transporters involved in the uptake and the secretion of coenzymes tetrahydrobiopterin (BH4), dihydrobiopterin (BH2) and sepiapterin to urine, thereby determining baseline levels of blood biopterins. May be involved in the basolateral transport of steviol, a metabolite of the popular sugar substitute stevioside. May participate in the detoxification/ renal excretion of drugs and xenobiotics, such as the histamine H(2)-receptor antagonists fexofenadine and cimetidine, the antibiotic benzylpenicillin (PCG), the anionic herbicide 2,4-dichloro-phenoxyacetate (2,4-D), the diagnostic agent p-aminohippurate (PAH), the antiviral acyclovir (ACV), and the mycotoxin ochratoxin (OTA), by transporting these exogenous organic anions across the cell membrane in exchange for dicarboxylates such as 2-oxoglutarate. Contributes to the renal uptake of potent uremic toxins (indoxyl sulfate (IS), indole acetate (IA), hippurate/N-benzoylglycine (HA) and 3-carboxy-4-methyl-5-propyl-2-furanpropionate (CMPF)), pravastatin, PCG, E1S and dehydroepiandrosterone sulfate (DHEAS), and is partly involved in the renal uptake of temocaprilat (an angiotensin-converting enzyme (ACE) inhibitor). May contribute to the release of cortisol in the adrenals. Involved in one of the detoxification systems on the choroid plexus (CP), removes substrates such as E1S or taurocholate (TC), PCG, 2,4-D and PAH, from the cerebrospinal fluid (CSF) to the blood for eventual excretion in urine and bile. Also contributes to the uptake of several other organic compounds such as the prostanoids prostaglandin E(2) and prostaglandin F(2-alpha), L-carnitine, and the therapeutic drugs allopurinol, 6-mercaptopurine (6-MP) and 5-fluorouracil (5-FU). Mediates the transport of PAH, PCG, and the statins pravastatin and pitavastatin, from the cerebrum into the blood circulation across the blood-brain barrier (BBB). In summary, plays a role in the efflux of drugs and xenobiotics, helping reduce their undesired toxicological effects on the body. The sequence is that of Organic anion transporter 3 from Homo sapiens (Human).